We begin with the raw amino-acid sequence, 273 residues long: Urease accessory protein UreD (273 aa).

The protein belongs to the UreD family. UreD, UreF and UreG form a complex that acts as a GTP-hydrolysis-dependent molecular chaperone, activating the urease apoprotein by helping to assemble the nickel containing metallocenter of UreC. The UreE protein probably delivers the nickel.

Its subcellular location is the cytoplasm. Functionally, required for maturation of urease via the functional incorporation of the urease nickel metallocenter. The sequence is that of Urease accessory protein UreD from Rhizobium etli (strain ATCC 51251 / DSM 11541 / JCM 21823 / NBRC 15573 / CFN 42).